We begin with the raw amino-acid sequence, 81 residues long: Sulfur carrier protein TusA (81 aa).

The active-site Cysteine persulfide intermediate is the Cys19.

The protein belongs to the sulfur carrier protein TusA family.

The protein localises to the cytoplasm. Its function is as follows. Sulfur carrier protein which probably makes part of a sulfur-relay system. The polypeptide is Sulfur carrier protein TusA (Shewanella woodyi (strain ATCC 51908 / MS32)).